The primary structure comprises 311 residues: Heme A synthase (311 aa).

Topologically, residues 1 to 6 (MQRFIK) are cytoplasmic. The helical transmembrane segment at 7–27 (WLAVITSLDLLIVLLGGALVT) threads the bilayer. The Extracellular portion of the chain corresponds to 28–62 (KTGSGQGCGKSWPLCNGEFVPSNLSMETIIELSHR). The cysteines at positions 35 and 42 are disulfide-linked. Glu58 is a catalytic residue. His61 is a binding site for heme o. Residues 63 to 83 (LTSGSAGILVTLLCILSWKYY) form a helical membrane-spanning segment. The Cytoplasmic portion of the chain corresponds to 84 to 91 (KHVRETKT). The helical transmembrane segment at 92–112 (LAILSFVFLVAQALMGAAAVV) threads the bilayer. The Extracellular portion of the chain corresponds to 113–121 (WGQMPAVLA). A helical membrane pass occupies residues 122–142 (IHFGISLISFASVILLTCLIF). His123 serves as a coordination point for heme o. Residues 143 to 159 (EIDQKFDARSLIMDKKM) lie on the Cytoplasmic side of the membrane. The helical transmembrane segment at 160-180 (KFHIYGVTIYSYIVVYTGALV) threads the bilayer. Topologically, residues 181 to 211 (RHERASLACPDFPLCSKNRPMPTQLHEWVQM) are extracellular. A disulfide bond links Cys189 and Cys195. The chain crosses the membrane as a helical span at residues 212-232 (GHRVAAMLIFAWILYAMILAI). A heme b-binding site is contributed by His213. The Cytoplasmic segment spans residues 233–243 (RHYKQQPVVYW). Residues 244–264 (GWIISFILVTLQAIVGILVVF) form a helical membrane-spanning segment. Residues 265–271 (TNASLSM) lie on the Extracellular side of the membrane. Residues 272–292 (ALLHSLFISCLFAVLCYLVML) form a helical membrane-spanning segment. His275 is a heme b binding site. The Cytoplasmic portion of the chain corresponds to 293–311 (GTRSKVNAKEAASISKQTK).

This sequence belongs to the COX15/CtaA family. Type 1 subfamily. Interacts with CtaB. The cofactor is heme b.

The protein resides in the cell membrane. It catalyses the reaction Fe(II)-heme o + 2 A + H2O = Fe(II)-heme a + 2 AH2. It functions in the pathway porphyrin-containing compound metabolism; heme A biosynthesis; heme A from heme O: step 1/1. Its function is as follows. Catalyzes the conversion of heme O to heme A by two successive hydroxylations of the methyl group at C8. The first hydroxylation forms heme I, the second hydroxylation results in an unstable dihydroxymethyl group, which spontaneously dehydrates, resulting in the formyl group of heme A. The polypeptide is Heme A synthase (Bacillus cereus (strain AH187)).